Here is a 687-residue protein sequence, read N- to C-terminus: Light-independent protochlorophyllide reductase subunit B (687 aa).

Aspartate 36 serves as a coordination point for [4Fe-4S] cluster. Aspartate 441 acts as the Proton donor in catalysis. 576–577 (GM) serves as a coordination point for substrate.

It belongs to the ChlB/BchB/BchZ family. In terms of assembly, protochlorophyllide reductase is composed of three subunits; ChlL, ChlN and ChlB. Forms a heterotetramer of two ChlB and two ChlN subunits. It depends on [4Fe-4S] cluster as a cofactor.

The protein localises to the plastid. It localises to the chloroplast. The enzyme catalyses chlorophyllide a + oxidized 2[4Fe-4S]-[ferredoxin] + 2 ADP + 2 phosphate = protochlorophyllide a + reduced 2[4Fe-4S]-[ferredoxin] + 2 ATP + 2 H2O. The protein operates within porphyrin-containing compound metabolism; chlorophyll biosynthesis (light-independent). In terms of biological role, component of the dark-operative protochlorophyllide reductase (DPOR) that uses Mg-ATP and reduced ferredoxin to reduce ring D of protochlorophyllide (Pchlide) to form chlorophyllide a (Chlide). This reaction is light-independent. The NB-protein (ChlN-ChlB) is the catalytic component of the complex. This is Light-independent protochlorophyllide reductase subunit B from Chlamydomonas reinhardtii (Chlamydomonas smithii).